The primary structure comprises 245 residues: MRLLLTNDDGIMAEGIQVLAKHFEKDNEVIIAAPDVQRSGSGHCITTVPGELIIQEVKLEGINSKAYSITGTPADCARLGVRKLGNNQIDMVISGINNGFNLGIDSLYSGTVSAAIEAAICETPSIAVSLDTKGGNYDYNIAAEYALEVFSIYKDKYKNKDENVVLSLNVPCLPREKIKGLKVCRVGFKYHLQEIYDKGEKTEELSYNYTDIYYVKRGYAALSPLHYDLTNYKILGDINNLFTEK.

A divalent metal cation-binding residues include Asp8, Asp9, Ser39, and Asn97.

It belongs to the SurE nucleotidase family. A divalent metal cation is required as a cofactor.

It is found in the cytoplasm. It catalyses the reaction a ribonucleoside 5'-phosphate + H2O = a ribonucleoside + phosphate. Functionally, nucleotidase that shows phosphatase activity on nucleoside 5'-monophosphates. This Clostridium kluyveri (strain NBRC 12016) protein is 5'-nucleotidase SurE.